A 543-amino-acid polypeptide reads, in one-letter code: Headcase protein homolog (543 aa).

Disordered stretches follow at residues Met1–Gly26 and Met197–Ala283. Composition is skewed to basic and acidic residues over residues Met197 to Thr211 and Pro235 to Ser250. Residues Ser264 and Ser268 each carry the phosphoserine modification.

As to expression, expressed in all tissues examined. Highest levels are in the spleen, thymus, peripheral blood and heart. Lowest in the kidney and pancreas.

May play an important role in some human cancers. May be part of the regulatory mechanism in the development of epithelial tube networks such as the circulatory system and lungs. The polypeptide is Headcase protein homolog (HECA) (Homo sapiens (Human)).